The sequence spans 198 residues: NAD(P)H dehydrogenase (quinone) (198 aa).

In terms of domain architecture, Flavodoxin-like spans 4-190; it reads VLVLYYSAYG…EGAKYQGAHV (187 aa). FMN contacts are provided by residues 10 to 15 and 78 to 80; these read SAYGHI and TRF. Y12 contributes to the NAD(+) binding site. W98 is a substrate binding site. FMN contacts are provided by residues 113–119 and H134; that span reads SSATQHG.

It belongs to the WrbA family. The cofactor is FMN.

The catalysed reaction is a quinone + NADH + H(+) = a quinol + NAD(+). It carries out the reaction a quinone + NADPH + H(+) = a quinol + NADP(+). This chain is NAD(P)H dehydrogenase (quinone), found in Rhizobium johnstonii (strain DSM 114642 / LMG 32736 / 3841) (Rhizobium leguminosarum bv. viciae).